The chain runs to 287 residues: Cell wall protein PIR5 (287 aa).

The signal sequence occupies residues 1 to 21; it reads MHYKKAFLASLLSSIALTAYA. A propeptide spanning residues 22–62 is cleaved from the precursor; sequence PPEPWATLTPSSKMDGGTTEYRTSFGLAVIPFTVTESKVKR. PIR1/2/3 repeat units follow at residues 62–80, 81–99, 104–122, and 144–162; these read RNVI…TQKL, PHPV…TQKV, SHIV…TAKN, and ATAV…ISSA.

This sequence belongs to the PIR protein family. In terms of processing, covalently linked to beta-1,3-glucan of the inner cell wall layer via an alkali-sensitive ester linkage between the gamma-carboxyl group of glutamic acids, arising from specific glutamines within the PIR1/2/3 repeats, and hydroxyl groups of glucoses of beta-1,3-glucan chains.

The protein resides in the secreted. It localises to the cell wall. Its function is as follows. Component of the outer cell wall layer. May be involved in meiosis and sporulation. This is Cell wall protein PIR5 (PIR5) from Saccharomyces cerevisiae (strain YJM789) (Baker's yeast).